Reading from the N-terminus, the 506-residue chain is UPF0522 protein A (506 aa).

The signal sequence occupies residues 1–18 (MIKSLLLLISIIIGIVIS). 6 N-linked (GlcNAc...) asparagine glycosylation sites follow: asparagine 145, asparagine 155, asparagine 330, asparagine 366, asparagine 418, and asparagine 427.

It belongs to the UPF0522 family.

Its subcellular location is the secreted. This chain is UPF0522 protein A, found in Dictyostelium discoideum (Social amoeba).